Reading from the N-terminus, the 329-residue chain is Ig gamma-2C chain C region (329 aa).

Residues 1-97 form a CH1 region; the sequence is ARTTAPSVYP…ATKSNLIKRI (97 aa). A disulfide bond links Cys-27 and Cys-82. Residues 98–113 are hinge; sequence EPRRPKPRPPTDICSC. Residues 114-222 form a CH2 region; that stretch reads DDNLGRPSVF…PIEKTISKPR (109 aa). 2 disulfides stabilise this stretch: Cys-143–Cys-203 and Cys-249–Cys-307. Residues 223–329 are CH3; sequence GKARTPQVYT…QKNLSRSPGK (107 aa).

This Rattus norvegicus (Rat) protein is Ig gamma-2C chain C region.